Reading from the N-terminus, the 865-residue chain is AP-1 complex subunit gamma-1 (865 aa).

The interval 665-690 (AEPLETPVDEMTQSPQSSLSRAPSTS) is disordered. Positions 675-690 (MTQSPQSSLSRAPSTS) are enriched in polar residues. The GAE domain maps to 746–860 (KSYPPIVVFD…LDQVDFGKLP (115 aa)).

It belongs to the adaptor complexes large subunit family. Adaptor protein complex 1 (AP-1) is a heterotetramer composed of two large adaptins (gamma-type subunit apl4 and beta-type subunit apl2), a medium adaptin (mu-type subunit apm1) and a small adaptin (sigma-type subunit aps1). AP-1 interacts with clathrin.

The protein localises to the cytoplasmic vesicle. It localises to the clathrin-coated vesicle membrane. It is found in the golgi apparatus. Functionally, adaptins are components of the adaptor complexes which link clathrin to receptors in coated vesicles. Clathrin-associated protein complexes are believed to interact with the cytoplasmic tails of membrane proteins, leading to their selection and concentration. The AP-1 complex interacts directly with clathrin. This Schizosaccharomyces pombe (strain 972 / ATCC 24843) (Fission yeast) protein is AP-1 complex subunit gamma-1 (apl4).